The sequence spans 158 residues: Toxin Tse2 (158 aa).

As to quaternary structure, forms a heterotetramer with Tsi2 consisting of two Tse2 dimers and two Tsi2 dimers. Formation of the complex inactivates Tse2 enzymatic activity.

Its subcellular location is the secreted. Toxin secreted by the H1 type VI (H1-T6SS) secretion system into the cytoplasm of recipient cells. Acts likely as a NAD-dependent cytotoxin towards both prokaryotic and eukaryotic cells. This Pseudomonas aeruginosa (strain ATCC 15692 / DSM 22644 / CIP 104116 / JCM 14847 / LMG 12228 / 1C / PRS 101 / PAO1) protein is Toxin Tse2.